The sequence spans 141 residues: Small ribosomal subunit protein uS8c (141 aa).

The protein belongs to the universal ribosomal protein uS8 family. Part of the 30S ribosomal subunit.

Its subcellular location is the plastid. It localises to the chloroplast. Its function is as follows. One of the primary rRNA binding proteins, it binds directly to 16S rRNA central domain where it helps coordinate assembly of the platform of the 30S subunit. The polypeptide is Small ribosomal subunit protein uS8c (rps8) (Chlamydomonas reinhardtii (Chlamydomonas smithii)).